A 373-amino-acid polypeptide reads, in one-letter code: UDP-N-acetylglucosamine--N-acetylmuramyl-(pentapeptide) pyrophosphoryl-undecaprenol N-acetylglucosamine transferase (373 aa).

UDP-N-acetyl-alpha-D-glucosamine-binding positions include 13–15 (TGG), N124, R164, S192, and Q293.

It belongs to the glycosyltransferase 28 family. MurG subfamily.

The protein resides in the cell inner membrane. It carries out the reaction di-trans,octa-cis-undecaprenyl diphospho-N-acetyl-alpha-D-muramoyl-L-alanyl-D-glutamyl-meso-2,6-diaminopimeloyl-D-alanyl-D-alanine + UDP-N-acetyl-alpha-D-glucosamine = di-trans,octa-cis-undecaprenyl diphospho-[N-acetyl-alpha-D-glucosaminyl-(1-&gt;4)]-N-acetyl-alpha-D-muramoyl-L-alanyl-D-glutamyl-meso-2,6-diaminopimeloyl-D-alanyl-D-alanine + UDP + H(+). It participates in cell wall biogenesis; peptidoglycan biosynthesis. Its function is as follows. Cell wall formation. Catalyzes the transfer of a GlcNAc subunit on undecaprenyl-pyrophosphoryl-MurNAc-pentapeptide (lipid intermediate I) to form undecaprenyl-pyrophosphoryl-MurNAc-(pentapeptide)GlcNAc (lipid intermediate II). In Allorhizobium ampelinum (strain ATCC BAA-846 / DSM 112012 / S4) (Agrobacterium vitis (strain S4)), this protein is UDP-N-acetylglucosamine--N-acetylmuramyl-(pentapeptide) pyrophosphoryl-undecaprenol N-acetylglucosamine transferase.